Reading from the N-terminus, the 288-residue chain is DegV domain-containing protein (288 aa).

Residues 3–282 (IAVMTDSTSY…SGGLGLGYVG (280 aa)) enclose the DegV domain. 2 residues coordinate hexadecanoate: T62 and S95.

In terms of biological role, may bind long-chain fatty acids, such as palmitate, and may play a role in lipid transport or fatty acid metabolism. This is DegV domain-containing protein from Staphylococcus aureus.